Consider the following 232-residue polypeptide: Ribose-5-phosphate isomerase A (232 aa).

Substrate-binding positions include 31 to 34, 87 to 90, and 100 to 103; these read TGST, DGAD, and KGGG. Catalysis depends on E109, which acts as the Proton acceptor. Substrate is bound at residue K127.

It belongs to the ribose 5-phosphate isomerase family. In terms of assembly, homodimer.

The enzyme catalyses aldehydo-D-ribose 5-phosphate = D-ribulose 5-phosphate. Its pathway is carbohydrate degradation; pentose phosphate pathway; D-ribose 5-phosphate from D-ribulose 5-phosphate (non-oxidative stage): step 1/1. Catalyzes the reversible conversion of ribose-5-phosphate to ribulose 5-phosphate. The chain is Ribose-5-phosphate isomerase A from Bifidobacterium longum (strain DJO10A).